Reading from the N-terminus, the 285-residue chain is Eukaryotic translation initiation factor 3 subunit F-2 (285 aa).

An MPN domain is found at 11–145; sequence VYLKPLVFFQ…TRLYCAVEMG (135 aa).

This sequence belongs to the eIF-3 subunit F family. Component of the eukaryotic translation initiation factor 3 (eIF-3) complex. The eIF-3 complex interacts with pix.

It is found in the cytoplasm. Component of the eukaryotic translation initiation factor 3 (eIF-3) complex, which is involved in protein synthesis of a specialized repertoire of mRNAs and, together with other initiation factors, stimulates binding of mRNA and methionyl-tRNAi to the 40S ribosome. The eIF-3 complex specifically targets and initiates translation of a subset of mRNAs involved in cell proliferation. This chain is Eukaryotic translation initiation factor 3 subunit F-2, found in Drosophila melanogaster (Fruit fly).